The sequence spans 442 residues: Elongation factor 1-gamma (442 aa).

Residues 2 to 87 (AAGTLYTYPE…FLSNDALRGS (86 aa)) form the GST N-terminal domain. The 129-residue stretch at 88–216 (TPQASAQVLQ…VKLCEKMAQF (129 aa)) folds into the GST C-terminal domain. 2 stretches are compositionally biased toward basic and acidic residues: residues 224–242 (MQPK…KEGG) and 249–263 (QEKK…KAAP). The tract at residues 224-273 (MQPKKEAPAKKEKAGKEGGKQQQPQQEKKEKKKEEKKAAPAEEEMDECEA) is disordered. The EF-1-gamma C-terminal domain maps to 281–442 (AKDPYAHLPK…KSFNQGKIFK (162 aa)).

In terms of assembly, EF-1 is composed of four subunits: alpha, beta, delta, and gamma.

Functionally, probably plays a role in anchoring the complex to other cellular components. This is Elongation factor 1-gamma (eef1g) from Carassius auratus (Goldfish).